A 354-amino-acid chain; its full sequence is Guanine nucleotide-binding protein G(t) subunit alpha-3 (354 aa).

The segment at 1 to 26 (MGIGISSESKESAKRSKELEKKLQED) is disordered. A lipid anchor (N-myristoyl glycine) is attached at G2. The segment covering 8 to 26 (ESKESAKRSKELEKKLQED) has biased composition (basic and acidic residues). The G-alpha domain occupies 32–354 (RTVKLLLLGA…KENLKDCGLF (323 aa)). The tract at residues 35 to 48 (KLLLLGAGESGKST) is G1 motif. Residues 40–47 (GAGESGKS), 175–181 (LHSRVKT), 200–204 (DVGGQ), 269–272 (NKKD), and A326 contribute to the GTP site. S47 and T181 together coordinate Mg(2+). A G2 motif region spans residues 173–181 (DVLHSRVKT). The tract at residues 196-205 (FRMFDVGGQR) is G3 motif. A G4 motif region spans residues 265-272 (VLFLNKKD). Residues 324–329 (TCATDT) are G5 motif.

Belongs to the G-alpha family. G(i/o/t/z) subfamily. G proteins are composed of 3 units; alpha, beta and gamma, respectively GNAT3, GNB1 and GNG13 for Gustducin heterotrimer for bitter taste transduction. The alpha chain contains the guanine nucleotide binding site. Component of the TAS2R14-GNAT3 complex, consisting of TAS2R14, GNAT3, GNB1 and GNG2; within the complex interacts with TAS2R14; this complex plays a role in the perception of bitterness. Gustducin heterotrimer may also be composed of GNAT3, GNB3 and GNG13. Expressed in epithelial cells of taste buds of the circumvallate, foliate and fungiform. Detected in various region of the respiratory track. Expressed also in spermatozoa.

Its subcellular location is the cytoplasm. Guanine nucleotide-binding protein (G protein) alpha subunit playing a prominent role in bitter and sweet taste transduction as well as in umami (monosodium glutamate, monopotassium glutamate, and inosine monophosphate) taste transduction. The protein is Guanine nucleotide-binding protein G(t) subunit alpha-3 (GNAT3) of Bos taurus (Bovine).